We begin with the raw amino-acid sequence, 109 residues long: Aquaporin-2 (109 aa).

The Cytoplasmic segment spans residues 1–6 (SIAFSR). A helical transmembrane segment spans residues 7 to 27 (AVFSEFLATLLFVFFGLGSAL). At 28–35 (NWPQALPS) the chain is on the extracellular side. The chain crosses the membrane as a helical span at residues 36–54 (VLQIAMAFGLAIGTLVQAL). Topologically, residues 55–59 (GHISG) are cytoplasmic. Positions 60-69 (AHINPAVTVA) form an intramembrane region, discontinuously helical. The short motif at 63 to 65 (NPA) is the NPA 1 element. At 70–80 (CLVGCHVSFLR) the chain is on the cytoplasmic side. Residues 81–102 (ATFYLAAQLLGAVAGAAILHEI) form a helical membrane-spanning segment. At 103 to 109 (TPPDIRG) the chain is on the extracellular side.

This sequence belongs to the MIP/aquaporin (TC 1.A.8) family. In terms of assembly, homotetramer. Serine phosphorylation is necessary and sufficient for expression at the apical membrane. Endocytosis is not phosphorylation-dependent. In terms of processing, N-glycosylated.

The protein resides in the apical cell membrane. Its subcellular location is the basolateral cell membrane. The protein localises to the cell membrane. It localises to the cytoplasmic vesicle membrane. It is found in the golgi apparatus. The protein resides in the trans-Golgi network membrane. It carries out the reaction H2O(in) = H2O(out). The enzyme catalyses glycerol(in) = glycerol(out). Its function is as follows. Forms a water-specific channel that provides the plasma membranes of renal collecting duct with high permeability to water, thereby permitting water to move in the direction of an osmotic gradient. Plays an essential role in renal water homeostasis. Could also be permeable to glycerol. The chain is Aquaporin-2 from Dugong dugon (Dugong).